The primary structure comprises 36 residues: Photosystem I reaction center subunit VIII (36 aa).

A helical membrane pass occupies residues 7 to 29; it reads PSIFVPLVGLVFPAITMASLFIY.

The protein belongs to the PsaI family.

Its subcellular location is the plastid. The protein localises to the chloroplast thylakoid membrane. May help in the organization of the PsaL subunit. This chain is Photosystem I reaction center subunit VIII, found in Psilotum nudum (Whisk fern).